The primary structure comprises 288 residues: MIGPISQINISGGLSEKETSSLISNEELKNIITQLETDISDGSWFHKNYSRMDVEVMPALVIQANNKYPEMNLNLVTSPLDLSIEIKNVIENGVRSSRFIINMGEGGIHFSVIDYKHINGKTSLILFEPANFNSMGPAMLAIRTKTAIERYQLPDCHFSMVEMDIQRSSSECGIFSLALAKKLYIERDSLLKIHEDNIKGILSDGENPLPHDKLDPYLPVTFYKHTQGKKRLNEYLNTNPQGVGTVVNKKNETIVNRFDNNKSIVDGKELSVSVHKKRIAEYKTLLKV.

Catalysis depends on residues His109 and Glu128. Residue His109 coordinates CoA. 167–168 contacts CoA; it reads RS. Cys172 is a catalytic residue. 1D-myo-inositol hexakisphosphate is bound by residues 182–185 and 224–225; these read KLYI and KH. Position 227-230 (227-230) interacts with CoA; it reads QGKK. A 1D-myo-inositol hexakisphosphate-binding site is contributed by Arg257. Position 266–270 (266–270) interacts with CoA; it reads DGKEL.

It belongs to the acetyltransferase YopJ family. 1D-myo-inositol hexakisphosphate serves as cofactor.

It is found in the secreted. The enzyme catalyses L-threonyl-[protein] + acetyl-CoA = O-acetyl-L-threonyl-[protein] + CoA. It catalyses the reaction L-seryl-[protein] + acetyl-CoA = O-acetyl-L-seryl-[protein] + CoA. Its activity is regulated as follows. 1D-myo-inositol hexakisphosphate activates protein-acetyltransferase activity via an allosteric mechanism: 1D-myo-inositol hexakisphosphate-binding induces a conformational rearrangement that stimulates the interaction with acetyl-CoA. Functionally, serine/threonine-protein acetyltransferase translocated into infected cells, which inhibits the host immune response and induces cell death by mediating acetylation of target proteins. Inhibits the MAPK and NF-kappa-B signaling pathways by acetylating protein-kinases such as MAP2K1, MAP2K6, MAP3K7/TAK1 and I-kappa-B kinase (CHUK/IKKA and IKBKB) on serine and threonine residues critical for their activation by phosphorylation, thereby preventing protein-kinase activation. Promotes pyroptosis, a programmed cell death, in host cells by mediating acetylation of MAP3K7/TAK1: MAP3K7/TAK1 inactivation triggers activation of caspase-8 (CASP8), followed by CASP8-dependent cleavage of gasdermin-D (GSDMD) and induction of pyroptosis. This Yersinia pestis protein is Serine/threonine-protein acetyltransferase YopJ.